The primary structure comprises 248 residues: Probable transcriptional regulatory protein PFL_4766 (248 aa).

Belongs to the TACO1 family.

It is found in the cytoplasm. The chain is Probable transcriptional regulatory protein PFL_4766 from Pseudomonas fluorescens (strain ATCC BAA-477 / NRRL B-23932 / Pf-5).